The sequence spans 338 residues: DNA-directed RNA polymerase subunit alpha (338 aa).

The interval 1-233 (MYKNWRELIK…EQLQIFINFD (233 aa)) is alpha N-terminal domain (alpha-NTD). Residues 250–338 (INENLYRSVE…KMIQEGKEDL (89 aa)) are alpha C-terminal domain (alpha-CTD).

Belongs to the RNA polymerase alpha chain family. As to quaternary structure, homodimer. The RNAP catalytic core consists of 2 alpha, 1 beta, 1 beta' and 1 omega subunit. When a sigma factor is associated with the core the holoenzyme is formed, which can initiate transcription.

It carries out the reaction RNA(n) + a ribonucleoside 5'-triphosphate = RNA(n+1) + diphosphate. In terms of biological role, DNA-dependent RNA polymerase catalyzes the transcription of DNA into RNA using the four ribonucleoside triphosphates as substrates. The protein is DNA-directed RNA polymerase subunit alpha of Syntrophotalea carbinolica (strain DSM 2380 / NBRC 103641 / GraBd1) (Pelobacter carbinolicus).